Here is a 275-residue protein sequence, read N- to C-terminus: COP9 signalosome complex subunit 7a (275 aa).

N-acetylserine is present on Ser2. A PCI domain is found at 2 to 159; the sequence is SAEVKVTGQN…QRLEVDYSIG (158 aa). Residues 185 to 233 adopt a coiled-coil conformation; that stretch reads LSGIEEQVSRANQHKEQQLGLKQQIESEVANLKKTIKVTTAAAAAATSQ. Positions 227-275 are disordered; it reads AAAATSQDPEQHLTELREPAPGTNQRQPSKKASKGKGLRGSAKIWSKSN. The segment covering 235–244 has biased composition (basic and acidic residues); it reads PEQHLTELRE. Basic residues predominate over residues 254-263; that stretch reads PSKKASKGKG.

It belongs to the CSN7/EIF3M family. CSN7 subfamily. Component of the CSN complex, composed of COPS1/GPS1, COPS2, COPS3, COPS4, COPS5, COPS6, COPS7 (COPS7A or COPS7B), COPS8 and COPS9. In the complex, it probably interacts directly with COPS1, COPS2, COPS4, COPS5, COPS6 and COPS8. Interacts with PMF1. Interacts with the translation initiation factor EIF3S6. Interacts with CK2 and PKD. Interacts directly with ID3. In terms of processing, phosphorylated by CK2 and PKD kinases.

Its subcellular location is the cytoplasm. The protein resides in the nucleus. Component of the COP9 signalosome complex (CSN), a complex involved in various cellular and developmental processes. The CSN complex is an essential regulator of the ubiquitin (Ubl) conjugation pathway by mediating the deneddylation of the cullin subunits of SCF-type E3 ligase complexes, leading to decrease the Ubl ligase activity of SCF-type complexes such as SCF, CSA or DDB2. The complex is also involved in phosphorylation of p53/TP53, JUN, I-kappa-B-alpha/NFKBIA, ITPK1 and IRF8/ICSBP, possibly via its association with CK2 and PKD kinases. CSN-dependent phosphorylation of TP53 and JUN promotes and protects degradation by the Ubl system, respectively. This Pongo abelii (Sumatran orangutan) protein is COP9 signalosome complex subunit 7a (COPS7A).